The sequence spans 222 residues: GTP cyclohydrolase 1 (222 aa).

The Zn(2+) site is built by cysteine 111, histidine 114, and cysteine 182.

The protein belongs to the GTP cyclohydrolase I family. Toroid-shaped homodecamer, composed of two pentamers of five dimers.

The catalysed reaction is GTP + H2O = 7,8-dihydroneopterin 3'-triphosphate + formate + H(+). It functions in the pathway cofactor biosynthesis; 7,8-dihydroneopterin triphosphate biosynthesis; 7,8-dihydroneopterin triphosphate from GTP: step 1/1. The chain is GTP cyclohydrolase 1 from Klebsiella pneumoniae subsp. pneumoniae (strain ATCC 700721 / MGH 78578).